The sequence spans 450 residues: UDP-N-acetylmuramoylalanine--D-glutamate ligase (450 aa).

G119 to T125 provides a ligand contact to ATP.

The protein belongs to the MurCDEF family.

The protein resides in the cytoplasm. The catalysed reaction is UDP-N-acetyl-alpha-D-muramoyl-L-alanine + D-glutamate + ATP = UDP-N-acetyl-alpha-D-muramoyl-L-alanyl-D-glutamate + ADP + phosphate + H(+). It functions in the pathway cell wall biogenesis; peptidoglycan biosynthesis. Functionally, cell wall formation. Catalyzes the addition of glutamate to the nucleotide precursor UDP-N-acetylmuramoyl-L-alanine (UMA). The protein is UDP-N-acetylmuramoylalanine--D-glutamate ligase of Streptococcus thermophilus (strain ATCC BAA-491 / LMD-9).